Consider the following 385-residue polypeptide: Cytochrome b (385 aa).

A run of 4 helical transmembrane segments spans residues 32 to 52, 76 to 98, 113 to 133, and 179 to 199; these read FGSL…TLAM, WLIR…LHIG, AWIL…LGYV, and FFAL…MHLI. The heme b site is built by H82 and H96. H183 and H197 together coordinate heme b. Position 202 (H202) interacts with a ubiquinone. The next 4 membrane-spanning stretches (helical) occupy residues 226–246, 290–310, 322–342, and 349–369; these read YLFK…IFVF, LLGV…PKTD, LSKI…QLGA, and FIEF…IIMP.

Belongs to the cytochrome b family. As to quaternary structure, fungal cytochrome b-c1 complex contains 10 subunits; 3 respiratory subunits, 2 core proteins and 5 low-molecular weight proteins. Cytochrome b-c1 complex is a homodimer. The cofactor is heme b.

The protein localises to the mitochondrion inner membrane. In terms of biological role, component of the ubiquinol-cytochrome c reductase complex (complex III or cytochrome b-c1 complex) that is part of the mitochondrial respiratory chain. The b-c1 complex mediates electron transfer from ubiquinol to cytochrome c. Contributes to the generation of a proton gradient across the mitochondrial membrane that is then used for ATP synthesis. This Akanthomyces muscarius (Entomopathogenic fungus) protein is Cytochrome b (cob).